We begin with the raw amino-acid sequence, 728 residues long: Polyribonucleotide nucleotidyltransferase (728 aa).

The Mg(2+) site is built by D487 and D493. One can recognise a KH domain in the interval P554–I613. An S1 motif domain is found at G623–K691. The segment covering T697–P707 has biased composition (acidic residues). Residues T697–D728 form a disordered region. The segment covering E709–G718 has biased composition (basic and acidic residues).

It belongs to the polyribonucleotide nucleotidyltransferase family. The cofactor is Mg(2+).

It is found in the cytoplasm. The catalysed reaction is RNA(n+1) + phosphate = RNA(n) + a ribonucleoside 5'-diphosphate. Its function is as follows. Involved in mRNA degradation. Catalyzes the phosphorolysis of single-stranded polyribonucleotides processively in the 3'- to 5'-direction. This chain is Polyribonucleotide nucleotidyltransferase, found in Parvibaculum lavamentivorans (strain DS-1 / DSM 13023 / NCIMB 13966).